Here is a 1044-residue protein sequence, read N- to C-terminus: Probable translation initiation factor IF-2 (1044 aa).

The region spanning 173–265 (FAGTIFGREN…LSLILLRLGI (93 aa)) is the DOD-type homing endonuclease domain. The region spanning 451 to 668 (TTETHNFIAN…LIAGLSQKYL (218 aa)) is the tr-type G domain. Residues 524–528 (DTPGH) and 578–581 (NKID) contribute to the GTP site.

This sequence belongs to the TRAFAC class translation factor GTPase superfamily. Classic translation factor GTPase family. IF-2 subfamily. This protein undergoes a protein self splicing that involves a post-translational excision of the intervening region (intein) followed by peptide ligation.

Its function is as follows. Function in general translation initiation by promoting the binding of the formylmethionine-tRNA to ribosomes. Seems to function along with eIF-2. The chain is Probable translation initiation factor IF-2 (infB) from Pyrococcus horikoshii (strain ATCC 700860 / DSM 12428 / JCM 9974 / NBRC 100139 / OT-3).